The primary structure comprises 279 residues: Sulfur carrier protein FdhD (279 aa).

The active-site Cysteine persulfide intermediate is the cysteine 122.

This sequence belongs to the FdhD family.

It is found in the cytoplasm. In terms of biological role, required for formate dehydrogenase (FDH) activity. Acts as a sulfur carrier protein that transfers sulfur from IscS to the molybdenum cofactor prior to its insertion into FDH. The protein is Sulfur carrier protein FdhD of Thermoplasma volcanium (strain ATCC 51530 / DSM 4299 / JCM 9571 / NBRC 15438 / GSS1).